The primary structure comprises 136 residues: Histone H3-7 (136 aa).

Residues 1 to 43 (MARTKQTARKSTGGKAPRKQLATKAARKSAPATGGVKKPHRYR) form a disordered region. R3 is subject to Asymmetric dimethylarginine. R3 is modified (citrulline; alternate). T4 is subject to Phosphothreonine. K5 carries the allysine; alternate modification. At K5 the chain carries N6,N6,N6-trimethyllysine; alternate. K5 is subject to N6,N6-dimethyllysine; alternate. At K5 the chain carries N6-(2-hydroxyisobutyryl)lysine; alternate. N6-(beta-hydroxybutyryl)lysine; alternate is present on K5. Position 5 is an N6-acetyllysine; alternate (K5). K5 is subject to N6-methyllysine; alternate. Q6 bears the 5-glutamyl dopamine; alternate mark. Q6 carries the post-translational modification 5-glutamyl serotonin; alternate. T7 is subject to Phosphothreonine. Citrulline; alternate is present on R9. At R9 the chain carries Symmetric dimethylarginine. K10 bears the N6,N6,N6-trimethyllysine; alternate mark. Residue K10 is modified to N6,N6-dimethyllysine; alternate. K10 carries the post-translational modification N6-(2-hydroxyisobutyryl)lysine; alternate. K10 carries the N6-(beta-hydroxybutyryl)lysine; alternate modification. N6-acetyllysine; alternate is present on K10. At K10 the chain carries N6-methyllysine; alternate. Position 10 is an N6-lactoyllysine; alternate (K10). At S11 the chain carries ADP-ribosylserine; alternate. S11 carries the post-translational modification Phosphoserine; alternate. T12 bears the Phosphothreonine mark. An N6-(2-hydroxyisobutyryl)lysine; alternate modification is found at K15. K15 carries the N6-(beta-hydroxybutyryl)lysine; alternate modification. K15 is subject to N6-acetyllysine; alternate. K15 is subject to N6-lactoyllysine; alternate. K15 is modified (N6-glutaryllysine; alternate). The residue at position 15 (K15) is an N6-succinyllysine; alternate. Position 18 is an asymmetric dimethylarginine (R18). Citrulline; alternate is present on R18. An N6-(2-hydroxyisobutyryl)lysine; alternate mark is found at K19 and K24. An N6-(beta-hydroxybutyryl)lysine; alternate mark is found at K19 and K24. N6-acetyllysine; alternate is present on residues K19 and K24. K19 and K24 each carry N6-methyllysine; alternate. K19 and K24 each carry N6-lactoyllysine; alternate. 2 positions are modified to N6-glutaryllysine; alternate: K19 and K24. Residues K19 and K24 each carry the N6-butyryllysine; alternate modification. Residue R27 is modified to Citrulline. An N6,N6,N6-trimethyllysine; alternate modification is found at K28. K28 is modified (N6,N6-dimethyllysine; alternate). N6-(2-hydroxyisobutyryl)lysine; alternate is present on K28. K28 is modified (N6-acetyllysine; alternate). K28 is modified (N6-methyllysine; alternate). An N6-lactoyllysine; alternate modification is found at K28. N6-glutaryllysine; alternate is present on K28. S29 carries the ADP-ribosylserine; alternate modification. S29 carries the post-translational modification Phosphoserine; alternate. K37 is subject to N6,N6,N6-trimethyllysine; alternate. The residue at position 37 (K37) is an N6,N6-dimethyllysine; alternate. K37 carries the post-translational modification N6-(2-hydroxyisobutyryl)lysine; alternate. K37 is subject to N6-acetyllysine; alternate. K37 is modified (N6-methyllysine; alternate). K38 is subject to N6-methyllysine. Y42 is modified (phosphotyrosine). Residue K57 is modified to N6,N6,N6-trimethyllysine; alternate. Residue K57 is modified to N6-(2-hydroxyisobutyryl)lysine; alternate. K57 is modified (N6-(beta-hydroxybutyryl)lysine; alternate). Position 57 is an N6-acetyllysine; alternate (K57). K57 bears the N6-lactoyllysine; alternate mark. N6-glutaryllysine; alternate is present on K57. The residue at position 57 (K57) is an N6-succinyllysine; alternate. Position 57 is an N6-methyllysine (K57). The residue at position 58 (S58) is a Phosphoserine. N6-(2-hydroxyisobutyryl)lysine; alternate is present on residues K65 and K80. K65 and K80 each carry N6-methyllysine; alternate. K80 carries the N6,N6,N6-trimethyllysine; alternate modification. K80 bears the N6,N6-dimethyllysine; alternate mark. K80 bears the N6-acetyllysine; alternate mark. K80 carries the post-translational modification N6-lactoyllysine; alternate. K80 bears the N6-glutaryllysine; alternate mark. K80 is subject to N6-succinyllysine; alternate. T81 bears the Phosphothreonine mark. Position 87 is a phosphoserine (S87). A Phosphothreonine modification is found at T108. K116 and K123 each carry N6-acetyllysine; alternate. K116 and K123 each carry N6-glutaryllysine; alternate. K123 bears the N6-(2-hydroxyisobutyryl)lysine; alternate mark. Residue K123 is modified to N6-methyllysine; alternate. K123 bears the N6-succinyllysine; alternate mark.

This sequence belongs to the histone H3 family. As to quaternary structure, the nucleosome is a histone octamer containing two molecules each of H2A, H2B, H3 and H4 assembled in one H3-H4 heterotetramer and two H2A-H2B heterodimers. The octamer wraps approximately 147 bp of DNA. During nucleosome assembly the chaperone ASF1A interacts with the histone H3-H4 heterodimer. In terms of processing, acetylation is generally linked to gene activation. Acetylation on Lys-10 (H3K9ac) impairs methylation at Arg-9 (H3R8me2s). Acetylation on Lys-19 (H3K18ac) and Lys-24 (H3K24ac) favors methylation at Arg-18 (H3R17me). Acetylation at Lys-123 (H3K122ac) by EP300/p300 plays a central role in chromatin structure: localizes at the surface of the histone octamer and stimulates transcription, possibly by promoting nucleosome instability. Post-translationally, citrullination at Arg-9 (H3R8ci) and/or Arg-18 (H3R17ci) by PADI4 impairs methylation and represses transcription. Asymmetric dimethylation at Arg-18 (H3R17me2a) by CARM1 is linked to gene activation. Symmetric dimethylation at Arg-9 (H3R8me2s) by PRMT5 is linked to gene repression. Asymmetric dimethylation at Arg-3 (H3R2me2a) by PRMT6 is linked to gene repression and is mutually exclusive with H3 Lys-5 methylation (H3K4me2 and H3K4me3). H3R2me2a is present at the 3' of genes regardless of their transcription state and is enriched on inactive promoters, while it is absent on active promoters. In terms of processing, methylation at Lys-5 (H3K4me), Lys-37 (H3K36me) and Lys-80 (H3K79me) are linked to gene activation. Methylation at Lys-5 (H3K4me) facilitates subsequent acetylation of H3 and H4. Methylation at Lys-80 (H3K79me) is associated with DNA double-strand break (DSB) responses and is a specific target for TP53BP1. Methylation at Lys-10 (H3K9me) and Lys-28 (H3K27me) are linked to gene repression. Methylation at Lys-10 (H3K9me) is a specific target for HP1 proteins (CBX1, CBX3 and CBX5) and prevents subsequent phosphorylation at Ser-11 (H3S10ph) and acetylation of H3 and H4. Methylation at Lys-5 (H3K4me) and Lys-80 (H3K79me) require preliminary monoubiquitination of H2B at 'Lys-120'. Methylation at Lys-10 (H3K9me) and Lys-28 (H3K27me) are enriched in inactive X chromosome chromatin. Monomethylation at Lys-57 (H3K56me1) by EHMT2/G9A in G1 phase promotes interaction with PCNA and is required for DNA replication. Post-translationally, phosphorylated at Thr-4 (H3T3ph) by HASPIN during prophase and dephosphorylated during anaphase. Phosphorylation at Ser-11 (H3S10ph) by AURKB is crucial for chromosome condensation and cell-cycle progression during mitosis and meiosis. In addition phosphorylation at Ser-11 (H3S10ph) by RPS6KA4 and RPS6KA5 is important during interphase because it enables the transcription of genes following external stimulation, like mitogens, stress, growth factors or UV irradiation and result in the activation of genes, such as c-fos and c-jun. Phosphorylation at Ser-11 (H3S10ph), which is linked to gene activation, prevents methylation at Lys-10 (H3K9me) but facilitates acetylation of H3 and H4. Phosphorylation at Ser-11 (H3S10ph) by AURKB mediates the dissociation of HP1 proteins (CBX1, CBX3 and CBX5) from heterochromatin. Phosphorylation at Ser-11 (H3S10ph) is also an essential regulatory mechanism for neoplastic cell transformation. Phosphorylated at Ser-29 (H3S28ph) by MAP3K20 isoform 1, RPS6KA5 or AURKB during mitosis or upon ultraviolet B irradiation. Phosphorylation at Thr-7 (H3T6ph) by PRKCB is a specific tag for epigenetic transcriptional activation that prevents demethylation of Lys-5 (H3K4me) by LSD1/KDM1A. At centromeres, specifically phosphorylated at Thr-12 (H3T11ph) from prophase to early anaphase, by DAPK3 and PKN1. Phosphorylation at Thr-12 (H3T11ph) by PKN1 or isoform M2 of PKM (PKM2) is a specific tag for epigenetic transcriptional activation that promotes demethylation of Lys-10 (H3K9me) by KDM4C/JMJD2C. Phosphorylation at Tyr-42 (H3Y41ph) by JAK2 promotes exclusion of CBX5 (HP1 alpha) from chromatin. Ubiquitinated. In terms of processing, lysine deamination at Lys-5 (H3K4all) to form allysine is mediated by LOXL2. Allysine formation by LOXL2 only takes place on H3K4me3 and results in gene repression. Post-translationally, butyrylation of histones marks active promoters and competes with histone acetylation. It is present during late spermatogenesis. Succinylation at Lys-80 (H3K79succ) by KAT2A takes place with a maximum frequency around the transcription start sites of genes. It gives a specific tag for epigenetic transcription activation. Desuccinylation at Lys-123 (H3K122succ) by SIRT7 in response to DNA damage promotes chromatin condensation and double-strand breaks (DSBs) repair. In terms of processing, serine ADP-ribosylation constitutes the primary form of ADP-ribosylation of proteins in response to DNA damage. Serine ADP-ribosylation at Ser-11 (H3S10ADPr) is mutually exclusive with phosphorylation at Ser-11 (H3S10ph) and impairs acetylation at Lys-10 (H3K9ac).

It localises to the nucleus. It is found in the chromosome. In terms of biological role, core component of nucleosome. Nucleosomes wrap and compact DNA into chromatin, limiting DNA accessibility to the cellular machineries which require DNA as a template. Histones thereby play a central role in transcription regulation, DNA repair, DNA replication and chromosomal stability. DNA accessibility is regulated via a complex set of post-translational modifications of histones, also called histone code, and nucleosome remodeling. The sequence is that of Histone H3-7 from Homo sapiens (Human).